We begin with the raw amino-acid sequence, 355 residues long: Glycerol-3-phosphate dehydrogenase [NAD(P)+] (355 aa).

NADPH-binding residues include S14, W15, R35, and K117. Residues K117, G147, and S149 each contribute to the sn-glycerol 3-phosphate site. Residue A151 participates in NADPH binding. Residues K202, D255, S265, R266, and N267 each contribute to the sn-glycerol 3-phosphate site. The active-site Proton acceptor is the K202. Residue R266 participates in NADPH binding. Positions 290 and 292 each coordinate NADPH.

It belongs to the NAD-dependent glycerol-3-phosphate dehydrogenase family.

It localises to the cytoplasm. It carries out the reaction sn-glycerol 3-phosphate + NAD(+) = dihydroxyacetone phosphate + NADH + H(+). The catalysed reaction is sn-glycerol 3-phosphate + NADP(+) = dihydroxyacetone phosphate + NADPH + H(+). Its pathway is membrane lipid metabolism; glycerophospholipid metabolism. Functionally, catalyzes the reduction of the glycolytic intermediate dihydroxyacetone phosphate (DHAP) to sn-glycerol 3-phosphate (G3P), the key precursor for phospholipid synthesis. The sequence is that of Glycerol-3-phosphate dehydrogenase [NAD(P)+] from Lawsonia intracellularis (strain PHE/MN1-00).